We begin with the raw amino-acid sequence, 440 residues long: Xylose isomerase (440 aa).

Residues His99 and Asp102 contribute to the active site. Residues Glu230, Glu266, His269, Asp294, Asp305, Asp307, and Asp337 each coordinate Mg(2+).

This sequence belongs to the xylose isomerase family. Homotetramer. Mg(2+) is required as a cofactor.

It localises to the cytoplasm. It catalyses the reaction alpha-D-xylose = alpha-D-xylulofuranose. In Halalkalibacterium halodurans (strain ATCC BAA-125 / DSM 18197 / FERM 7344 / JCM 9153 / C-125) (Bacillus halodurans), this protein is Xylose isomerase.